Reading from the N-terminus, the 759-residue chain is uncharacterized protein (759 aa).

Disordered regions lie at residues 1 to 31 and 188 to 211; these read MDGNRRVRFNTDRRPYLSPLQTSFPSSTSFQ and NDEGEDVKDNEQDDNIDESDPFAN. Positions 17-31 are enriched in low complexity; that stretch reads LSPLQTSFPSSTSFQ. Over residues 189 to 207 the composition is skewed to acidic residues; the sequence is DEGEDVKDNEQDDNIDESD. The next 10 membrane-spanning stretches (helical) occupy residues 434 to 454, 456 to 476, 486 to 505, 517 to 537, 555 to 575, 597 to 617, 620 to 640, 643 to 663, 670 to 690, and 726 to 746; these read YFRTWILVVFYGFASATILPM, FQGGWIDLPIAFILGCLVGIL, MYNSLFEVTGSIITSFLSRA, FCFSALAEGAIVLILPGYIVL, MFYAIIYSLFLSFGISIGAAL, DKWKILFVPLFTLCLLIVNQA, SQWPVSIFISCAGYVVNYFTA, FGSNPIANAIGSFAIGCLGNI, GVAFAAVLPAIFVQVPSGLAA, and LVMVQIAIGISVGLFASALVV.

It belongs to the ThrE exporter (TC 2.A.79) family.

Its subcellular location is the endoplasmic reticulum membrane. This is an uncharacterized protein from Schizosaccharomyces pombe (strain 972 / ATCC 24843) (Fission yeast).